The sequence spans 440 residues: Kinetochore protein NUF2 homolog (440 aa).

Coiled coils occupy residues 142–239 (LGLL…LRSQ) and 299–386 (INEQ…RQTN).

The protein belongs to the NUF2 family. In terms of assembly, component of the NDC80 complex, which consists of NDC80, NUF2, SPC24 and SPC25.

Its subcellular location is the chromosome. The protein localises to the centromere. Functionally, acts as a component of the essential kinetochore-associated NDC80 complex, which is required for chromosome segregation and spindle checkpoint activity to ensure proper cell division. In Arabidopsis thaliana (Mouse-ear cress), this protein is Kinetochore protein NUF2 homolog.